Reading from the N-terminus, the 347-residue chain is Dihydroorotase (347 aa).

Zn(2+) is bound by residues histidine 13 and histidine 15. Substrate is bound by residues histidine 15–arginine 17 and asparagine 41. Zn(2+) is bound by residues lysine 99, histidine 136, and histidine 174. Lysine 99 is subject to N6-carboxylysine. Histidine 136 contacts substrate. Leucine 219 contacts substrate. Residue aspartate 247 participates in Zn(2+) binding. The active site involves aspartate 247. 2 residues coordinate substrate: histidine 251 and alanine 263.

The protein belongs to the metallo-dependent hydrolases superfamily. DHOase family. Class II DHOase subfamily. In terms of assembly, homodimer. Zn(2+) is required as a cofactor.

It catalyses the reaction (S)-dihydroorotate + H2O = N-carbamoyl-L-aspartate + H(+). It functions in the pathway pyrimidine metabolism; UMP biosynthesis via de novo pathway; (S)-dihydroorotate from bicarbonate: step 3/3. In terms of biological role, catalyzes the reversible cyclization of carbamoyl aspartate to dihydroorotate. This is Dihydroorotase from Rhizobium meliloti (strain 1021) (Ensifer meliloti).